Reading from the N-terminus, the 103-residue chain is Nematocin (103 aa).

An N-terminal signal peptide occupies residues 1–19 (MGSSPILLVLAISIGLASA). Cys-20 and Cys-25 are oxidised to a cystine. A Tyrosine amide modification is found at Tyr-30. The propeptide occupies 31–103 (GRTIRCSSCG…QGGCQTSAMC (73 aa)).

The protein belongs to the vasopressin/oxytocin family. Detected in thermosensory AFD neurons, neurosecretory NSM cells, AVK interneurons, pharyngeal neuron M5, and the mechanosensory DVA neuron. Detected in male-specific CP motor neurons.

The protein localises to the secreted. Ligand for the G-protein coupled receptor ntr-1. Plays a role in gustatory associative learning. Also plays a role in male mating behavior. In Caenorhabditis elegans, this protein is Nematocin.